Here is a 204-residue protein sequence, read N- to C-terminus: Holliday junction branch migration complex subunit RuvA (204 aa).

Residues 1-64 form a domain I region; the sequence is MIGRLQGILL…EDAHLLFGFA (64 aa). Positions 65–143 are domain II; the sequence is QKTDRTLFRE…GIKQSDFFVE (79 aa). The interval 144 to 155 is flexible linker; the sequence is STHIPLSPSIES. The segment at 156–204 is domain III; the sequence is HSESSSDEAISALIALGYKPAEAEKMVKRVAKPELTSEQVIREALKAAL.

This sequence belongs to the RuvA family. Homotetramer. Forms an RuvA(8)-RuvB(12)-Holliday junction (HJ) complex. HJ DNA is sandwiched between 2 RuvA tetramers; dsDNA enters through RuvA and exits via RuvB. An RuvB hexamer assembles on each DNA strand where it exits the tetramer. Each RuvB hexamer is contacted by two RuvA subunits (via domain III) on 2 adjacent RuvB subunits; this complex drives branch migration. In the full resolvosome a probable DNA-RuvA(4)-RuvB(12)-RuvC(2) complex forms which resolves the HJ.

Its subcellular location is the cytoplasm. Its function is as follows. The RuvA-RuvB-RuvC complex processes Holliday junction (HJ) DNA during genetic recombination and DNA repair, while the RuvA-RuvB complex plays an important role in the rescue of blocked DNA replication forks via replication fork reversal (RFR). RuvA specifically binds to HJ cruciform DNA, conferring on it an open structure. The RuvB hexamer acts as an ATP-dependent pump, pulling dsDNA into and through the RuvAB complex. HJ branch migration allows RuvC to scan DNA until it finds its consensus sequence, where it cleaves and resolves the cruciform DNA. The polypeptide is Holliday junction branch migration complex subunit RuvA (Haemophilus influenzae (strain 86-028NP)).